Consider the following 426-residue polypeptide: Stationary phase-inducible protein CsiE (426 aa).

2 PRD domains span residues 120 to 225 (ARNF…DPLR) and 229 to 336 (QRDR…ENDL).

The polypeptide is Stationary phase-inducible protein CsiE (csiE) (Escherichia coli (strain K12)).